The sequence spans 146 residues: MDSRLSAAYAIRAARISMIPGGVDGLVINYAEGGEPAWVQYPLKKQKPLPNNLCYTPTLEDIARKREAVIAKYTKQPLETGTTFTHVLNASHLNEQYTRVKKSALPDKEFPIIETEKYPEPPILWETTIGAPSRLFDRSDGVKYVR.

In terms of assembly, interacts with the major capsid protein.

It is found in the virion. Its function is as follows. One of the minor capsid proteins that constitute a network internal to the major capsid proteins and outside the lipid membrane. The minor capsid proteins glue and stabilize the capsomers. The polypeptide is Minor capsid protein P5 (Paramecium bursaria Chlorella virus 1 (PBCV-1)).